The following is a 572-amino-acid chain: Probable D-xylulose kinase A (572 aa).

Positions 95, 166, 282, and 283 each coordinate substrate. ATP-binding positions include Trp365, 470–471, and Asn474; that span reads GG.

Belongs to the FGGY kinase family.

Its subcellular location is the cytoplasm. The catalysed reaction is D-xylulose + ATP = D-xylulose 5-phosphate + ADP + H(+). Functionally, highly specific D-xylulose kinase which participates in the catabolism of xylose. Xylose is a major component of hemicelluloses such as xylan. Most fungi utilize D-xylose via three enzymatic reactions, xylose reductase (XR), xylitol dehydrogenase (XDH), and xylulokinase, to form xylulose 5-phosphate, which enters pentose phosphate pathway. In Aspergillus flavus (strain ATCC 200026 / FGSC A1120 / IAM 13836 / NRRL 3357 / JCM 12722 / SRRC 167), this protein is Probable D-xylulose kinase A (xkiA).